We begin with the raw amino-acid sequence, 306 residues long: Mating type protein SmtA-1 (306 aa).

Positions 49–104 (APKKKVNGFMGFRSYYSPLFSQFPQKARSPFMTILWQHDPFHNEWDFMCSVYSSIR) form a DNA-binding region, alpha box.

It belongs to the MATALPHA1 family.

The protein resides in the nucleus. In terms of biological role, mating type proteins are sequence specific DNA-binding proteins that act as master switches in fungal differentiation by controlling gene expression in a cell type-specific fashion. Transcriptional activator that induces the transcription of alpha-specific genes. The polypeptide is Mating type protein SmtA-1 (SMTA1) (Sordaria macrospora (strain ATCC MYA-333 / DSM 997 / K(L3346) / K-hell)).